The chain runs to 473 residues: MAP kinase-activated protein kinase 5 (473 aa).

The Protein kinase domain occupies 22–304 (INWTQKLGAG…IEGVLDHPWL (283 aa)). ATP contacts are provided by residues 28-36 (LGAGISGPV) and Lys-51. A Phosphoserine; by PKA modification is found at Ser-115. The Proton acceptor role is filled by Asp-148. Residue Thr-182 is modified to Phosphothreonine; by MAPK11, MAPK14, MAPK4, MAPK6 and PKA. 2 positions are modified to phosphoserine: Ser-212 and Ser-354. The stretch at 409 to 440 (ENEDEKLNEVMQEAWKYNRECKLLRDTLQSFS) forms a coiled coil.

The protein belongs to the protein kinase superfamily. CAMK Ser/Thr protein kinase family. In terms of assembly, interacts with ERK3/MAPK6 and ERK4/MAPK4 (via FRIEDE motif); the interaction is direct. Interacts with YWHAE; the interaction prevents phosphorylation of HSP27/HSPB1 leading to disrupt F-actin polymerization. Interacts with SQSTM1. Phosphorylated on Thr-182 ERK3/MAPK6 or ERK4/MAPK4; which is the regulatory phosphorylation site and is located on the T-loop/loop 12, leading to activation. Phosphorylation at Thr-182 by p38-alpha/MAPK14, p38-beta/MAPK11 is subject to debate. Phosphorylated at Ser-115 by PKA/PRKACA, leading to localization to the cytoplasm. Autophosphorylated. As to expression, expressed ubiquitously.

The protein resides in the cytoplasm. It localises to the nucleus. It catalyses the reaction L-seryl-[protein] + ATP = O-phospho-L-seryl-[protein] + ADP + H(+). The enzyme catalyses L-threonyl-[protein] + ATP = O-phospho-L-threonyl-[protein] + ADP + H(+). Its activity is regulated as follows. Activated following phosphorylation at Thr-182 by p38-alpha/MAPK14, p38-beta/MAPK11, ERK2/MAPK1, ERK3/MAPK6, and ERK4/MAPK4. Activated by stress-related extracellular stimuli; such as H(2)O(2), arsenite, anisomycin TNF alpha and also PMA and the calcium ionophore A23187; but to a lesser extent. In vitro, activated by SQSTM1. Inhibited by diterpenoid alkaloid noroxoaconitine. Tumor suppressor serine/threonine-protein kinase involved in mTORC1 signaling and post-transcriptional regulation. Phosphorylates FOXO3, ERK3/MAPK6, ERK4/MAPK4, HSP27/HSPB1, p53/TP53 and RHEB. Acts as a tumor suppressor by mediating Ras-induced senescence and phosphorylating p53/TP53. Involved in post-transcriptional regulation of MYC by mediating phosphorylation of FOXO3: phosphorylation of FOXO3 leads to promote nuclear localization of FOXO3, enabling expression of miR-34b and miR-34c, 2 post-transcriptional regulators of MYC that bind to the 3'UTR of MYC transcript and prevent MYC translation. Acts as a negative regulator of mTORC1 signaling by mediating phosphorylation and inhibition of RHEB. Part of the atypical MAPK signaling via its interaction with ERK3/MAPK6 or ERK4/MAPK4: the precise role of the complex formed with ERK3/MAPK6 or ERK4/MAPK4 is still unclear, but the complex follows a complex set of phosphorylation events: upon interaction with atypical MAPK (ERK3/MAPK6 or ERK4/MAPK4), ERK3/MAPK6 (or ERK4/MAPK4) is phosphorylated and then mediates phosphorylation and activation of MAPKAPK5, which in turn phosphorylates ERK3/MAPK6 (or ERK4/MAPK4). Mediates phosphorylation of HSP27/HSPB1 in response to PKA/PRKACA stimulation, inducing F-actin rearrangement. This chain is MAP kinase-activated protein kinase 5 (MAPKAPK5), found in Homo sapiens (Human).